The sequence spans 288 residues: Bifunctional protein FolD (288 aa).

NADP(+) is bound by residues 166-168 (GRS), Ser-191, and Ile-232.

This sequence belongs to the tetrahydrofolate dehydrogenase/cyclohydrolase family. In terms of assembly, homodimer.

The catalysed reaction is (6R)-5,10-methylene-5,6,7,8-tetrahydrofolate + NADP(+) = (6R)-5,10-methenyltetrahydrofolate + NADPH. The enzyme catalyses (6R)-5,10-methenyltetrahydrofolate + H2O = (6R)-10-formyltetrahydrofolate + H(+). Its pathway is one-carbon metabolism; tetrahydrofolate interconversion. Its function is as follows. Catalyzes the oxidation of 5,10-methylenetetrahydrofolate to 5,10-methenyltetrahydrofolate and then the hydrolysis of 5,10-methenyltetrahydrofolate to 10-formyltetrahydrofolate. The sequence is that of Bifunctional protein FolD from Rickettsia peacockii (strain Rustic).